A 253-amino-acid polypeptide reads, in one-letter code: Triosephosphate isomerase, cytosolic (253 aa).

Residues Asn-10 and Lys-12 each coordinate substrate. His-96 acts as the Electrophile in catalysis. Catalysis depends on Glu-166, which acts as the Proton acceptor.

Belongs to the triosephosphate isomerase family. In terms of assembly, homodimer.

Its subcellular location is the cytoplasm. It catalyses the reaction D-glyceraldehyde 3-phosphate = dihydroxyacetone phosphate. Its pathway is carbohydrate biosynthesis; gluconeogenesis. It functions in the pathway carbohydrate degradation; glycolysis; D-glyceraldehyde 3-phosphate from glycerone phosphate: step 1/1. This chain is Triosephosphate isomerase, cytosolic, found in Secale cereale (Rye).